Here is a 393-residue protein sequence, read N- to C-terminus: NAD(P)H-quinone oxidoreductase subunit H, chloroplastic (393 aa).

It belongs to the complex I 49 kDa subunit family. In terms of assembly, NDH is composed of at least 16 different subunits, 5 of which are encoded in the nucleus. Interacts with the chaperonin CNP60B4 subunit.

It localises to the plastid. The protein localises to the chloroplast thylakoid membrane. The catalysed reaction is a plastoquinone + NADH + (n+1) H(+)(in) = a plastoquinol + NAD(+) + n H(+)(out). It catalyses the reaction a plastoquinone + NADPH + (n+1) H(+)(in) = a plastoquinol + NADP(+) + n H(+)(out). Functionally, NDH shuttles electrons from NAD(P)H:plastoquinone, via FMN and iron-sulfur (Fe-S) centers, to quinones in the photosynthetic chain and possibly in a chloroplast respiratory chain. The immediate electron acceptor for the enzyme in this species is believed to be plastoquinone. Couples the redox reaction to proton translocation, and thus conserves the redox energy in a proton gradient. The protein is NAD(P)H-quinone oxidoreductase subunit H, chloroplastic of Arabidopsis thaliana (Mouse-ear cress).